The sequence spans 126 residues: Prostate and testis expressed protein 1 (126 aa).

Positions 1-21 (MDKSLLLELPILLCCFRALSG) are cleaved as a signal peptide. The region spanning 46–125 (VQCRMCHLQF…CRSHDLCNED (80 aa)) is the UPAR/Ly6 domain. Disulfide bonds link cysteine 48/cysteine 75, cysteine 51/cysteine 60, cysteine 67/cysteine 94, and cysteine 98/cysteine 115.

The protein belongs to the PATE family. In terms of tissue distribution, expressed specifically in prostate cancer, normal prostate, and testis. Expressed in the epithelial cells of the prostate cancer and normal prostate tissues.

The protein localises to the secreted. The sequence is that of Prostate and testis expressed protein 1 (PATE1) from Homo sapiens (Human).